The primary structure comprises 291 residues: Light-independent protochlorophyllide reductase iron-sulfur ATP-binding protein (291 aa).

Residues 10 to 15 and K39 contribute to the ATP site; that span reads GIGKST. Position 14 (S14) interacts with Mg(2+). [4Fe-4S] cluster-binding residues include C95 and C129. Residue 180–181 coordinates ATP; the sequence is NR.

The protein belongs to the NifH/BchL/ChlL family. Homodimer. Protochlorophyllide reductase is composed of three subunits; ChlL, ChlN and ChlB. It depends on [4Fe-4S] cluster as a cofactor.

The protein localises to the plastid. Its subcellular location is the chloroplast. It carries out the reaction chlorophyllide a + oxidized 2[4Fe-4S]-[ferredoxin] + 2 ADP + 2 phosphate = protochlorophyllide a + reduced 2[4Fe-4S]-[ferredoxin] + 2 ATP + 2 H2O. Its pathway is porphyrin-containing compound metabolism; chlorophyll biosynthesis (light-independent). Component of the dark-operative protochlorophyllide reductase (DPOR) that uses Mg-ATP and reduced ferredoxin to reduce ring D of protochlorophyllide (Pchlide) to form chlorophyllide a (Chlide). This reaction is light-independent. The L component serves as a unique electron donor to the NB-component of the complex, and binds Mg-ATP. The protein is Light-independent protochlorophyllide reductase iron-sulfur ATP-binding protein of Larix decidua (European larch).